Reading from the N-terminus, the 192-residue chain is Probable GTP-binding protein EngB (192 aa).

In terms of domain architecture, EngB-type G spans 22–192; the sequence is GRPEIVFVGR…LLASIDTFTQ (171 aa). GTP contacts are provided by residues 30–37, 57–61, 75–78, 142–145, and 172–174; these read GRSNVGKS, GKTRL, DLPG, TKWD, and YSS. Positions 37 and 59 each coordinate Mg(2+).

It belongs to the TRAFAC class TrmE-Era-EngA-EngB-Septin-like GTPase superfamily. EngB GTPase family. Mg(2+) is required as a cofactor.

In terms of biological role, necessary for normal cell division and for the maintenance of normal septation. This chain is Probable GTP-binding protein EngB, found in Chlorobaculum tepidum (strain ATCC 49652 / DSM 12025 / NBRC 103806 / TLS) (Chlorobium tepidum).